The chain runs to 89 residues: Small ribosomal subunit protein bS20 (89 aa).

This sequence belongs to the bacterial ribosomal protein bS20 family.

Its function is as follows. Binds directly to 16S ribosomal RNA. The sequence is that of Small ribosomal subunit protein bS20 from Wolbachia pipientis subsp. Culex pipiens (strain wPip).